The chain runs to 87 residues: Apolipoprotein C-I (87 aa).

The first 26 residues, Met1–Ala26, serve as a signal peptide directing secretion.

The protein belongs to the apolipoprotein C1 family.

The protein resides in the secreted. Functionally, inhibitor of lipoprotein binding to the low density lipoprotein (LDL) receptor, LDL receptor-related protein, and very low density lipoprotein (VLDL) receptor. Associates with high density lipoproteins (HDL) and the triacylglycerol-rich lipoproteins in the plasma and makes up about 10% of the protein of the VLDL and 2% of that of HDL. Appears to interfere directly with fatty acid uptake and is also the major plasma inhibitor of cholesteryl ester transfer protein (CETP). Binds free fatty acids and reduces their intracellular esterification. Modulates the interaction of APOE with beta-migrating VLDL and inhibits binding of beta-VLDL to the LDL receptor-related protein. This Zalophus californianus (California sealion) protein is Apolipoprotein C-I (APOC1).